The chain runs to 207 residues: Large ribosomal subunit protein uL4 (207 aa).

The disordered stretch occupies residues His-49–Ile-78.

Belongs to the universal ribosomal protein uL4 family. As to quaternary structure, part of the 50S ribosomal subunit.

One of the primary rRNA binding proteins, this protein initially binds near the 5'-end of the 23S rRNA. It is important during the early stages of 50S assembly. It makes multiple contacts with different domains of the 23S rRNA in the assembled 50S subunit and ribosome. Functionally, forms part of the polypeptide exit tunnel. The sequence is that of Large ribosomal subunit protein uL4 from Streptococcus agalactiae serotype Ia (strain ATCC 27591 / A909 / CDC SS700).